The following is a 667-amino-acid chain: Probable potassium transport system protein Kup (667 aa).

12 helical membrane passes run 16-36, 58-78, 101-121, 146-166, 167-187, 221-241, 253-273, 294-314, 343-363, 373-393, 399-419, and 431-451; these read GFII…LYTM, VSLI…LIAL, WLII…ALTP, TNVI…QRFG, TGVI…VLGI, IFIL…YSDL, WPFV…WILA, VYLV…LISG, LYIP…VLYF, YGLA…YYLI, PLLA…FFLA, and VVVL…GTVI.

The protein belongs to the HAK/KUP transporter (TC 2.A.72) family.

The protein localises to the cell membrane. It catalyses the reaction K(+)(in) + H(+)(in) = K(+)(out) + H(+)(out). In terms of biological role, transport of potassium into the cell. Likely operates as a K(+):H(+) symporter. The chain is Probable potassium transport system protein Kup from Streptococcus equi subsp. zooepidemicus (strain H70).